The chain runs to 400 residues: WW domain-containing transcription regulator protein 1 (400 aa).

Lysine 46 participates in a covalent cross-link: Glycyl lysine isopeptide (Lys-Gly) (interchain with G-Cter in ubiquitin). A disordered region spans residues phenylalanine 52–serine 117. Residues histidine 61 to serine 70 are compositionally biased toward polar residues. A Phosphoserine modification is found at serine 62. Serine 89 bears the Phosphoserine; by LATS2 mark. Residue serine 105 is modified to Phosphoserine. The 34-residue stretch at leucine 124–lysine 157 folds into the WW domain. The interval proline 222–leucine 400 is required for interaction with PALS1. Residues leucine 225–alanine 259 are a coiled coil. At serine 295 the chain carries Phosphoserine. At serine 311 the chain carries Phosphoserine; by LATS2. The PDZ-binding motif lies at glutamate 394–leucine 400.

In terms of assembly, binds to SLC9A3R2 via the PDZ motif at the plasma membrane. Binds to YWHAZ in vivo and in vitro through the phosphoserine-binding motif RSHSSP. Interacts (via coiled-coil domain) with SMAD2 (via MH1 domain), SMAD3 and SMAD4. Interacts with MED15. Interacts with PAX8 and NKX2-1. Interacts with TEAD1, TEAD2, TEAD3 and TEAD4. Interacts (via WW domain) with PALS1. Interacts with LATS1. Interacts with YAP1 (when phosphorylated at 'Ser-127'). Interacts (via WW domain) with PRRG4 (via cytoplasmic domain). Interacts (via WW domain) with AMOTL2 (via PPXY motif); the interaction promotes WWTR1/TAZ localization to the cytoplasm and tight junctions, thereby inhibiting its transcriptional coactivator properties. Interacts (via WW domain) with AMOT isoform 1; the interaction facilitates translocation of WWTR1/TAZ to the cytoplasm. In terms of processing, phosphorylated by LATS2 and STK3/MST2. Phosphorylation by LATS2 results in creation of 14-3-3 binding sites, retention in the cytoplasm, and functional inactivation. Phosphorylation results in the inhibition of transcriptional coactivation through YWHAZ-mediated nuclear export. Phosphorylated in the nucleus by PRP4K; phosphorylation leads to nuclear exclusion. Post-translationally, ubiquitinated at Lys-46; leading to proteasomal degradation. Deubiquitinated and stabilized by UCHL1 at Lys-46; leading to inhibition of osteoclastogenesis. Highly expressed in kidney, heart, placenta and lung. Expressed in the thyroid tissue.

Its subcellular location is the nucleus. It is found in the cytoplasm. It localises to the cell membrane. The protein resides in the cell junction. The protein localises to the tight junction. In terms of biological role, transcriptional coactivator which acts as a downstream regulatory target in the Hippo signaling pathway that plays a pivotal role in organ size control and tumor suppression by restricting proliferation and promoting apoptosis. The core of this pathway is composed of a kinase cascade wherein STK3/MST2 and STK4/MST1, in complex with its regulatory protein SAV1, phosphorylates and activates LATS1/2 in complex with its regulatory protein MOB1, which in turn phosphorylates and inactivates YAP1 oncoprotein and WWTR1/TAZ. WWTR1 enhances PAX8 and NKX2-1/TTF1-dependent gene activation. In conjunction with YAP1, involved in the regulation of TGFB1-dependent SMAD2 and SMAD3 nuclear accumulation. Plays a key role in coupling SMADs to the transcriptional machinery such as the mediator complex. Regulates embryonic stem-cell self-renewal, promotes cell proliferation and epithelial-mesenchymal transition. The sequence is that of WW domain-containing transcription regulator protein 1 from Homo sapiens (Human).